Reading from the N-terminus, the 162-residue chain is Ubiquitin-fold modifier-conjugating enzyme 1 (162 aa).

The Glycyl thioester intermediate role is filled by cysteine 115.

It belongs to the ubiquitin-conjugating enzyme family. UFC1 subfamily. In terms of assembly, interacts with uba-5.

In terms of biological role, E2-like enzyme which forms an intermediate with ufm-1. The intermediate is formed via a thioester linkage. This chain is Ubiquitin-fold modifier-conjugating enzyme 1, found in Caenorhabditis briggsae.